We begin with the raw amino-acid sequence, 81 residues long: MLKIRLKRFGRKAQPCYRIVVTDSRVKRDGKALEEVGFYNPLTDETHLKFNRIVERLKTGAQPTETVRNIFLKAKVFDALT.

Belongs to the bacterial ribosomal protein bS16 family.

It is found in the plastid. It localises to the chloroplast. In Emiliania huxleyi (Coccolithophore), this protein is Small ribosomal subunit protein bS16c.